A 709-amino-acid chain; its full sequence is Polyribonucleotide nucleotidyltransferase (709 aa).

Mg(2+) is bound by residues Asp489 and Asp495. Residues 556-615 (PKIDMIKIDVDKIKVVIGKGGETIDKIIAETGVKIDIDEEGNVSIFSSDQAAIDRTKDII) form the KH domain. The region spanning 625–693 (GEVYHAKVVR…DKGRVDASMK (69 aa)) is the S1 motif domain.

The protein belongs to the polyribonucleotide nucleotidyltransferase family. The cofactor is Mg(2+).

It is found in the cytoplasm. It catalyses the reaction RNA(n+1) + phosphate = RNA(n) + a ribonucleoside 5'-diphosphate. Its function is as follows. Involved in mRNA degradation. Catalyzes the phosphorolysis of single-stranded polyribonucleotides processively in the 3'- to 5'-direction. This is Polyribonucleotide nucleotidyltransferase from Streptococcus agalactiae serotype III (strain NEM316).